Reading from the N-terminus, the 226-residue chain is METVVIVAIGVLATIFLASFAALVVVCRQRYCRPRDLLQRYDSKPIVDLIGAMETQSEPSELELDDVVITNPHIEAILENEDWIEDASGLMSHCIAILKICHTLTEKLVAMTMGSGAKMKTSASVSDIIVVAKRISPRVDDVVKSMYPPLDPKLLDARTTALLLSVSHLVLVTRNACHLTGGLDWIDQSLSAAEEHLEVLREAALASEPDKSLPNPEGFLQEQSAI.

Residues 1-3 (MET) lie on the Cytoplasmic side of the membrane. Positions 1 to 88 (METVVIVAIG…ENEDWIEDAS (88 aa)) are required for interaction with MYRF. A helical transmembrane segment spans residues 4–24 (VVIVAIGVLATIFLASFAALV). Residues 25 to 226 (VVCRQRYCRP…EGFLQEQSAI (202 aa)) are Extracellular-facing. A disordered region spans residues 207-226 (SEPDKSLPNPEGFLQEQSAI).

It belongs to the TMEM98 family. In terms of assembly, interacts (via N-terminal region) with MYRF; the interaction inhibits MYRF self-cleavage. Expressed in differentiated oligodendrocytes in early postanatal central nervous system tissues. Expressed by CD4(+) T cells, the expression increases upon activation (at protein level).

It is found in the endoplasmic reticulum membrane. The protein localises to the cell membrane. The protein resides in the secreted. It localises to the extracellular exosome. In terms of biological role, functions as a negative regulator of MYRF in oligodendrocyte differentiation and myelination. Interacts with the C-terminal of MYRF inhibiting MYRF self-cleavage and N-fragment nuclear translocation. The secreted form promotes differentiation of T helper 1 cells (Th1). The protein is Transmembrane protein 98 (Tmem98) of Mus musculus (Mouse).